The primary structure comprises 441 residues: Glutamyl-tRNA reductase (441 aa).

Substrate is bound by residues 49-52, Ser110, 115-117, and Gln121; these read TCNR and EPQ. The Nucleophile role is filled by Cys50. An NADP(+)-binding site is contributed by 190–195; sequence GAGEMA.

Belongs to the glutamyl-tRNA reductase family. Homodimer.

The enzyme catalyses (S)-4-amino-5-oxopentanoate + tRNA(Glu) + NADP(+) = L-glutamyl-tRNA(Glu) + NADPH + H(+). It functions in the pathway porphyrin-containing compound metabolism; protoporphyrin-IX biosynthesis; 5-aminolevulinate from L-glutamyl-tRNA(Glu): step 1/2. In terms of biological role, catalyzes the NADPH-dependent reduction of glutamyl-tRNA(Glu) to glutamate 1-semialdehyde (GSA). The chain is Glutamyl-tRNA reductase from Sulfurihydrogenibium sp. (strain YO3AOP1).